The following is a 297-amino-acid chain: MDKGEGLRLAATLRQWTRLYGGCHLLLGAVVCSLLAACSSSPPGGVKVVDRNGSAPAAARRTPVTSGQYIVRRGDTLYSIAFRFGWDWKALAARNGIAPPYTIQVGQAIQFGGRASTQPSVAKNTPVVAAPVATKPTPVPPAVSTSVPAKPAPAPASTTTPPSSGATPVVAGPAVGGWAWPASGTLIGRFASNGSLNKGIDIAGQLGQPVLAASGGTVVYAGSGLRGYGELVIIKHNETYVSAYGHNRRLLVREGQQVKVGQSIAEMGSTGTDRVKLHFEIRRQGKPVDPLQYLPRR.

Residues 1-22 form the signal peptide; sequence MDKGEGLRLAATLRQWTRLYGG. Residue C23 is the site of N-palmitoyl cysteine attachment. C23 is lipidated: S-diacylglycerol cysteine. The 45-residue stretch at 67 to 111 folds into the LysM domain; that stretch reads GQYIVRRGDTLYSIAFRFGWDWKALAARNGIAPPYTIQVGQAIQF. Residues 134-168 are disordered; it reads TKPTPVPPAVSTSVPAKPAPAPASTTTPPSSGATP.

It belongs to the E.coli NlpD/Haemophilus LppB family.

The protein localises to the cell inner membrane. This Pseudomonas aeruginosa (strain ATCC 15692 / DSM 22644 / CIP 104116 / JCM 14847 / LMG 12228 / 1C / PRS 101 / PAO1) protein is Lipoprotein NlpD/LppB homolog.